A 573-amino-acid chain; its full sequence is E3 ubiquitin-protein ligase RNF168 (573 aa).

Residues 16–55 (CQICVEILFEPVTLPCNHTLCKPCFESTVEKASLCCPFCR) form an RING-type zinc finger. Ser-70 is subject to Phosphoserine. The LR motif 1 signature appears at 110–128 (LSKPGELRREYEEEISKVE). A UMI motif motif is present at residues 143 to 151 (EEYIQKLLA). 2 disordered regions span residues 153-174 (EEEEEKRQAEKRHREMEEQLKS) and 196-277 (ASPL…EDMP). A compositionally biased stretch (basic and acidic residues) spans 157–174 (EKRQAEKRHREMEEQLKS). The MIU motif 1 signature appears at 168–191 (MEEQLKSDEELARRLSLDINNFCE). The residue at position 197 (Ser-197) is a Phosphoserine. A Glycyl lysine isopeptide (Lys-Gly) (interchain with G-Cter in SUMO2) cross-link involves residue Lys-210. Residues 231-243 (PKSQLGSASQSEV) are compositionally biased toward polar residues. Positions 245–261 (QEDRKSSMSKKIDDNSD) are enriched in basic and acidic residues. Position 363 is a phosphothreonine (Thr-363). Ser-416 is subject to Phosphoserine. An MIU motif 2 motif is present at residues 440–463 (RHKQEKQDRLLALQLQEEVDQEQM). The segment at 456 to 528 (EEVDQEQMRP…NHQQPSFKIQ (73 aa)) is disordered. The segment covering 461–470 (EQMRPDRQKG) has biased composition (basic and acidic residues). The short motif at 467 to 478 (RQKGSPDGYQLR) is the LR motif 2 element. Phosphoserine is present on Ser-471. The segment covering 494-519 (NSRDRNSKRQTELEQPKPRTDSKNEN) has biased composition (basic and acidic residues). Residue Lys-530 forms a Glycyl lysine isopeptide (Lys-Gly) (interchain with G-Cter in SUMO2) linkage. The disordered stretch occupies residues 540–573 (NSTNDNCNVSKTAHSLQPSKSQKSIFQMFQRVTK).

It belongs to the RNF168 family. In terms of assembly, monomer. Interacts with UBE2N/UBC13. In terms of processing, sumoylated with SUMO1 by PIAS4 in response to double-strand breaks (DSBs). Ubiquitinated.

The protein localises to the nucleus. The catalysed reaction is S-ubiquitinyl-[E2 ubiquitin-conjugating enzyme]-L-cysteine + [acceptor protein]-L-lysine = [E2 ubiquitin-conjugating enzyme]-L-cysteine + N(6)-ubiquitinyl-[acceptor protein]-L-lysine.. The protein operates within protein modification; protein ubiquitination. Functionally, E3 ubiquitin-protein ligase required for accumulation of repair proteins to sites of DNA damage. Acts with UBE2N/UBC13 to amplify the RNF8-dependent histone ubiquitination. Recruited to sites of DNA damage at double-strand breaks (DSBs) by binding to ubiquitinated histone H2A and H2AX and amplifies the RNF8-dependent H2A ubiquitination, promoting the formation of 'Lys-63'-linked ubiquitin conjugates. This leads to concentrate ubiquitinated histones H2A and H2AX at DNA lesions to the threshold required for recruitment of TP53BP1 and BRCA1. Also recruited at DNA interstrand cross-links (ICLs) sites and promotes accumulation of 'Lys-63'-linked ubiquitination of histones H2A and H2AX, leading to recruitment of FAAP20 and Fanconi anemia (FA) complex, followed by interstrand cross-link repair. H2A ubiquitination also mediates the ATM-dependent transcriptional silencing at regions flanking DSBs in cis, a mechanism to avoid collision between transcription and repair intermediates. Also involved in class switch recombination in immune system, via its role in regulation of DSBs repair. Following DNA damage, promotes the ubiquitination and degradation of JMJD2A/KDM4A in collaboration with RNF8, leading to unmask H4K20me2 mark and promote the recruitment of TP53BP1 at DNA damage sites. Not able to initiate 'Lys-63'-linked ubiquitination in vitro; possibly due to partial occlusion of the UBE2N/UBC13-binding region. Catalyzes monoubiquitination of 'Lys-13' and 'Lys-15' of nucleosomal histone H2A (H2AK13Ub and H2AK15Ub, respectively). The polypeptide is E3 ubiquitin-protein ligase RNF168 (Bos taurus (Bovine)).